We begin with the raw amino-acid sequence, 120 residues long: NAD(P)H-quinone oxidoreductase subunit 3, chloroplastic (120 aa).

3 helical membrane passes run 9–29 (IFWA…IISG), 64–84 (MFAL…PWAV), and 88–108 (VLGV…VVGS).

The protein belongs to the complex I subunit 3 family. As to quaternary structure, NDH is composed of at least 16 different subunits, 5 of which are encoded in the nucleus.

Its subcellular location is the plastid. The protein resides in the chloroplast thylakoid membrane. It catalyses the reaction a plastoquinone + NADH + (n+1) H(+)(in) = a plastoquinol + NAD(+) + n H(+)(out). The catalysed reaction is a plastoquinone + NADPH + (n+1) H(+)(in) = a plastoquinol + NADP(+) + n H(+)(out). NDH shuttles electrons from NAD(P)H:plastoquinone, via FMN and iron-sulfur (Fe-S) centers, to quinones in the photosynthetic chain and possibly in a chloroplast respiratory chain. The immediate electron acceptor for the enzyme in this species is believed to be plastoquinone. Couples the redox reaction to proton translocation, and thus conserves the redox energy in a proton gradient. The protein is NAD(P)H-quinone oxidoreductase subunit 3, chloroplastic of Nuphar advena (Common spatterdock).